The following is a 499-amino-acid chain: MHTHNNFKTPSDEDELDDLDEDMVVGVIAEIEQEVLNESDSDNDEYDLVDMGAPVPENDGDSSYDGNESISSDDSFDPNAADSDSDDSMLDDAGGASAGGATSAKRRKDDDNPSGSNRQSEATFDLDVDDETDETVRAMIAAIKKPRSAPPEIKLEDFITDICFHPDRDIIALATIIGDVHLYEYDNEANKLLRTIEVHSKACRDVEFTEDGRFLLTCSKDKCVMVTDMETEKLKKLYETAHDDAINTLHVLNENLFATGDDAGTVKLWDLRTKNAIFELKELEDQITQLTTNDQNKLLLATSADGYLTTFNIAARKMYVQSEPYEEELSCMGIYRGDSKLVVGTSKGRLYTYNWGQFGYHCDMYPGIKSPISLMIPITDRIACLAGEDGNIRACHIAPYRNLGVVGQHNMPIESLDVNSSGELIASSSHNNDVRFWNVKYFEDFGDIKYNEKHNAYKEQRHNLPSSKCSNASDFFADLTKEDADDDDHDPSAGPSNMA.

The segment at 1–130 (MHTHNNFKTP…EATFDLDVDD (130 aa)) is disordered. Acidic residues-rich tracts occupy residues 12–23 (DEDELDDLDEDM) and 31–48 (IEQE…EYDL). A compositionally biased stretch (low complexity) spans 91-103 (DDAGGASAGGATS). Residues 113–122 (PSGSNRQSEA) are compositionally biased toward polar residues. 6 WD repeats span residues 154 to 193 (KLED…NKLL), 198 to 237 (VHSK…LKKL), 241 to 279 (AHDD…AIFE), 282 to 321 (ELED…MYVQ), 324 to 363 (PYEE…YHCD), and 408 to 447 (QHNM…DFGD). Positions 480–499 (TKEDADDDDHDPSAGPSNMA) are disordered.

The protein belongs to the WD repeat WDR55 family.

This is WD repeat-containing protein 55 homolog from Drosophila yakuba (Fruit fly).